A 191-amino-acid chain; its full sequence is Ureidoglycolate lyase (191 aa).

This sequence belongs to the ureidoglycolate lyase family. Homodimer.

It carries out the reaction (S)-ureidoglycolate = urea + glyoxylate. It functions in the pathway nitrogen metabolism; (S)-allantoin degradation. In terms of biological role, catalyzes the catabolism of the allantoin degradation intermediate (S)-ureidoglycolate, generating urea and glyoxylate. Involved in the utilization of allantoin as secondary nitrogen source when primary sources are limiting. The polypeptide is Ureidoglycolate lyase (Schizosaccharomyces pombe (strain 972 / ATCC 24843) (Fission yeast)).